Here is a 339-residue protein sequence, read N- to C-terminus: Annexin A2 (339 aa).

Serine 2 bears the N-acetylserine mark. The tract at residues 2–24 is S100A10-binding site; it reads STVHEILCKLSLEGDHSTPPSAY. Position 24 is a phosphotyrosine; by SRC (tyrosine 24). Serine 26 carries the phosphoserine; by PKC modification. Annexin repeat units lie at residues 33–104 and 105–176; these read FDAE…GLLK and TPAQ…ALAK. At lysine 49 the chain carries N6-acetyllysine; alternate. A Glycyl lysine isopeptide (Lys-Gly) (interchain with G-Cter in SUMO1); alternate cross-link involves residue lysine 49. Lysine 49 participates in a covalent cross-link: Glycyl lysine isopeptide (Lys-Gly) (interchain with G-Cter in SUMO2); alternate. At lysine 152 the chain carries N6-acetyllysine. Phosphoserine is present on serine 184. Annexin repeat units lie at residues 189–261 and 265–336; these read ELID…NLVQ and NKPL…YLCG. Tyrosine 199 is subject to Phosphotyrosine. Lysine 227 carries the post-translational modification N6-acetyllysine.

Belongs to the annexin family. Heterotetramer containing 2 light chains of S100A10/p11 and 2 heavy chains of ANXA2/p36. Interacts with ATP1B1. Interacts with DYSF. Interacts with COCH. Interacts (via repeat Annexin 1) with PCSK9 (via the C-terminal domain); the interaction inhibits the degradation of LDLR. Interacts with CEACAM1 (via the cytoplasmic domain); this interaction is regulated by phosphorylation of CEACAM1. Interacts with APPL2 and APPL1; targets APPL2 to endosomes and acting in parallel to RAB5A. Interacts with S100A4. May interact with UBAP2. Interacts with PLEKHG4B; this interaction is required for PLEKHG4B localization to cell-cell adhesions. ISGylated.

It localises to the secreted. Its subcellular location is the extracellular space. The protein resides in the extracellular matrix. It is found in the basement membrane. The protein localises to the melanosome. Its function is as follows. Calcium-regulated membrane-binding protein whose affinity for calcium is greatly enhanced by anionic phospholipids. It binds two calcium ions with high affinity. May be involved in heat-stress response. Inhibits PCSK9-enhanced LDLR degradation, probably reduces PCSK9 protein levels via a translational mechanism but also competes with LDLR for binding with PCSK9. Binds to endosomes damaged by phagocytosis of particulate wear debris and participates in endosomal membrane stabilization, thereby limiting NLRP3 inflammasome activation. Required for endothelial cell surface plasmin generation and may support fibrinolytic surveillance and neoangiogenesis. The chain is Annexin A2 (ANXA2) from Bos taurus (Bovine).